A 195-amino-acid chain; its full sequence is Putative EGF-like and EMI domain-containing protein 1 (195 aa).

In terms of domain architecture, EGF-like spans 86–97; it reads CTCKSGYQGNRC.

This Homo sapiens (Human) protein is Putative EGF-like and EMI domain-containing protein 1 (EGFEM1P).